Reading from the N-terminus, the 418-residue chain is Bifunctional enzyme IspD/IspF (418 aa).

The tract at residues 1–261 is 2-C-methyl-D-erythritol 4-phosphate cytidylyltransferase; that stretch reads MADTPALIPQ…EFKRASDMNF (261 aa). Residues 262–418 are 2-C-methyl-D-erythritol 2,4-cyclodiphosphate synthase; sequence RIGEGWDIHA…RATVLLRKFI (157 aa). Asp-268 and His-270 together coordinate a divalent metal cation. 4-CDP-2-C-methyl-D-erythritol 2-phosphate is bound by residues 268–270 and 294–295; these read DIH and HS. His-302 provides a ligand contact to a divalent metal cation. 4-CDP-2-C-methyl-D-erythritol 2-phosphate-binding positions include 316 to 318 and 321 to 325; these read DIG and FPDTD.

In the N-terminal section; belongs to the IspD/TarI cytidylyltransferase family. IspD subfamily. This sequence in the C-terminal section; belongs to the IspF family. A divalent metal cation is required as a cofactor.

The enzyme catalyses 2-C-methyl-D-erythritol 4-phosphate + CTP + H(+) = 4-CDP-2-C-methyl-D-erythritol + diphosphate. It catalyses the reaction 4-CDP-2-C-methyl-D-erythritol 2-phosphate = 2-C-methyl-D-erythritol 2,4-cyclic diphosphate + CMP. It participates in isoprenoid biosynthesis; isopentenyl diphosphate biosynthesis via DXP pathway; isopentenyl diphosphate from 1-deoxy-D-xylulose 5-phosphate: step 2/6. The protein operates within isoprenoid biosynthesis; isopentenyl diphosphate biosynthesis via DXP pathway; isopentenyl diphosphate from 1-deoxy-D-xylulose 5-phosphate: step 4/6. Its function is as follows. Bifunctional enzyme that catalyzes the formation of 4-diphosphocytidyl-2-C-methyl-D-erythritol from CTP and 2-C-methyl-D-erythritol 4-phosphate (MEP) (IspD), and catalyzes the conversion of 4-diphosphocytidyl-2-C-methyl-D-erythritol 2-phosphate (CDP-ME2P) to 2-C-methyl-D-erythritol 2,4-cyclodiphosphate (ME-CPP) with a corresponding release of cytidine 5-monophosphate (CMP) (IspF). The polypeptide is Bifunctional enzyme IspD/IspF (Albidiferax ferrireducens (strain ATCC BAA-621 / DSM 15236 / T118) (Rhodoferax ferrireducens)).